The sequence spans 307 residues: Recombination-associated protein RdgC (307 aa).

Belongs to the RdgC family.

The protein localises to the cytoplasm. It localises to the nucleoid. Functionally, may be involved in recombination. The protein is Recombination-associated protein RdgC of Burkholderia orbicola (strain MC0-3).